A 162-amino-acid chain; its full sequence is Troponin C, skeletal muscle (162 aa).

Residue Ala1 is modified to N-acetylalanine. EF-hand domains follow at residues 17–52 (EMIA…LGQT), 53–88 (PTKE…QMKE), 93–128 (KSEE…SGES), and 129–162 (ITDE…EGVQ). Ca(2+)-binding residues include Asp30, Asp32, Asp36, Glu41, Asp66, Asp68, Ser70, Thr72, Glu77, Asp106, Asn108, Asp110, Tyr112, Glu117, Asp142, Asn144, Asp146, Lys148, and Glu153.

It belongs to the troponin C family.

Functionally, troponin is the central regulatory protein of striated muscle contraction. Tn consists of three components: Tn-I which is the inhibitor of actomyosin ATPase, Tn-T which contains the binding site for tropomyosin and Tn-C. The binding of calcium to Tn-C abolishes the inhibitory action of Tn on actin filaments. The sequence is that of Troponin C, skeletal muscle from Pelophylax lessonae (Pool frog).